The chain runs to 239 residues: Short palate, lung and nasal epithelium carcinoma-associated protein 2A (239 aa).

The signal sequence occupies residues 1-20; the sequence is MVQLWKLVLLCGLLAGTSES. Cys-166 and Cys-209 form a disulfide bridge.

Belongs to the BPI/LBP/Plunc superfamily. Plunc family. As to expression, detected in salivary tissues: parotid, submandibular and sublingual glands.

It localises to the secreted. The chain is Short palate, lung and nasal epithelium carcinoma-associated protein 2A (SPLUNC2A) from Bos taurus (Bovine).